Reading from the N-terminus, the 56-residue chain is Chymotrypsin inhibitor (56 aa).

Disulfide bonds link Cys3–Cys36, Cys12–Cys32, Cys16–Cys28, Cys20–Cys56, and Cys38–Cys50. Residues 3-56 enclose the TIL domain; sequence CGPNEVFNTCGSACAPTCAQPKTRICTMQCRIGCQCQEGFLRNGEGACVLPENC.

It belongs to the serine protease inhibitor-like (TIL domain-containing) family.

The protein localises to the secreted. Its function is as follows. Chymotrypsin and cathepsin G inhibitor. This chain is Chymotrypsin inhibitor, found in Apis mellifera (Honeybee).